Here is a 494-residue protein sequence, read N- to C-terminus: Alpha-amylase-related protein (494 aa).

Positions 1-20 (MIKFALALTLCLAGASLSLA) are cleaved as a signal peptide. At glutamine 21 the chain carries Pyrrolidone carboxylic acid. Residues cysteine 48 and cysteine 104 are joined by a disulfide bond. Ca(2+) contacts are provided by asparagine 118, glutamine 169, and aspartate 178. A disulfide bridge links cysteine 157 with cysteine 171. Residue arginine 206 coordinates chloride. The Nucleophile role is filled by aspartate 208. Histidine 212 contacts Ca(2+). Catalysis depends on glutamate 245, which acts as the Proton donor. The chloride site is built by asparagine 308 and arginine 343. 3 cysteine pairs are disulfide-bonded: cysteine 376–cysteine 382, cysteine 418–cysteine 441, and cysteine 448–cysteine 460.

This sequence belongs to the glycosyl hydrolase 13 family. Monomer. It depends on Ca(2+) as a cofactor. Chloride is required as a cofactor.

It localises to the secreted. It carries out the reaction Endohydrolysis of (1-&gt;4)-alpha-D-glucosidic linkages in polysaccharides containing three or more (1-&gt;4)-alpha-linked D-glucose units.. This chain is Alpha-amylase-related protein (Amyrel), found in Drosophila bakoue (Fruit fly).